Consider the following 339-residue polypeptide: Anthranilate phosphoribosyltransferase (339 aa).

5-phospho-alpha-D-ribose 1-diphosphate-binding positions include Gly81, 84 to 85 (GD), Thr89, 91 to 94 (NIST), 109 to 117 (KHGNRNLSS), and Thr121. Gly81 provides a ligand contact to anthranilate. Residue Ser93 participates in Mg(2+) binding. Position 112 (Asn112) interacts with anthranilate. Arg167 is a binding site for anthranilate. Mg(2+)-binding residues include Asp226 and Glu227.

It belongs to the anthranilate phosphoribosyltransferase family. In terms of assembly, homodimer. It depends on Mg(2+) as a cofactor.

The catalysed reaction is N-(5-phospho-beta-D-ribosyl)anthranilate + diphosphate = 5-phospho-alpha-D-ribose 1-diphosphate + anthranilate. It functions in the pathway amino-acid biosynthesis; L-tryptophan biosynthesis; L-tryptophan from chorismate: step 2/5. Its function is as follows. Catalyzes the transfer of the phosphoribosyl group of 5-phosphorylribose-1-pyrophosphate (PRPP) to anthranilate to yield N-(5'-phosphoribosyl)-anthranilate (PRA). In Ruegeria pomeroyi (strain ATCC 700808 / DSM 15171 / DSS-3) (Silicibacter pomeroyi), this protein is Anthranilate phosphoribosyltransferase.